The sequence spans 305 residues: Oxygen-dependent coproporphyrinogen-III oxidase (305 aa).

S93 lines the substrate pocket. H97 and H107 together coordinate a divalent metal cation. The active-site Proton donor is H107. Substrate is bound at residue 109 to 111; the sequence is NVR. 2 residues coordinate a divalent metal cation: H146 and H176. The segment at 241 to 276 is important for dimerization; the sequence is YVEFNLVFDRGTLFGLQSGGRTESILMSLPPQVRWG. 259 to 261 lines the substrate pocket; the sequence is GGR.

The protein belongs to the aerobic coproporphyrinogen-III oxidase family. In terms of assembly, homodimer. The cofactor is a divalent metal cation.

It localises to the cytoplasm. It carries out the reaction coproporphyrinogen III + O2 + 2 H(+) = protoporphyrinogen IX + 2 CO2 + 2 H2O. It participates in porphyrin-containing compound metabolism; protoporphyrin-IX biosynthesis; protoporphyrinogen-IX from coproporphyrinogen-III (O2 route): step 1/1. Functionally, involved in the heme biosynthesis. Catalyzes the aerobic oxidative decarboxylation of propionate groups of rings A and B of coproporphyrinogen-III to yield the vinyl groups in protoporphyrinogen-IX. This Pseudomonas aeruginosa (strain UCBPP-PA14) protein is Oxygen-dependent coproporphyrinogen-III oxidase.